The following is a 205-amino-acid chain: MFVKKGLLLVVSGPSGAGKGTICKELLKENDTIKLSVSATTRKPRTGEVDGVNYFFISKEKFEEMIEKGEFLEYAQIYDNFYGTPKAAIMECLEKGQDVLLEIEMQGAKQIKEVCPEGVFIFVLPPSLEELKNRIVGRGTETEAEIEKRFSCAYEEIKMIKDYDYFIFNEDVKTSAKEIEGIISSEKNKVSRYKNIIIEKFKEEL.

The 179-residue stretch at 6–184 folds into the Guanylate kinase-like domain; it reads GLLLVVSGPS…SAKEIEGIIS (179 aa). 13 to 20 lines the ATP pocket; the sequence is GPSGAGKG.

The protein belongs to the guanylate kinase family.

It localises to the cytoplasm. The catalysed reaction is GMP + ATP = GDP + ADP. Essential for recycling GMP and indirectly, cGMP. The chain is Guanylate kinase from Clostridioides difficile (strain 630) (Peptoclostridium difficile).